We begin with the raw amino-acid sequence, 135 residues long: Small ribosomal subunit protein uS9 (135 aa).

A compositionally biased stretch (basic and acidic residues) spans 107-118 (LVGDPRRTEPHK). The disordered stretch occupies residues 107–135 (LVGDPRRTEPHKPNRSTKGPRAKRQKSYR). Basic residues predominate over residues 119–135 (PNRSTKGPRAKRQKSYR).

Belongs to the universal ribosomal protein uS9 family. Part of the 30S ribosomal subunit.

The protein is Small ribosomal subunit protein uS9 of Pyrococcus furiosus (strain ATCC 43587 / DSM 3638 / JCM 8422 / Vc1).